The sequence spans 436 residues: Cyclic GMP-AMP synthase (436 aa).

112 to 117 (QGSFQY) contacts GTP. Residues aspartate 131 and aspartate 133 each coordinate Mg(2+). Residue arginine 182 participates in ATP binding. Aspartate 193 lines the Mg(2+) pocket. Serine 259 lines the ATP pocket. Residues lysine 287, serine 301, and aspartate 348 each coordinate GTP. Disordered regions lie at residues 339-358 (RGVESPDSTDEKPLFPPSYK) and 417-436 (AQEPSSASKPEKISSTMVSG). The segment covering 419 to 436 (EPSSASKPEKISSTMVSG) has biased composition (polar residues). Residue glycine 436 forms a Glycyl lysine isopeptide (Gly-Lys) (interchain with K-? in acceptor proteins) linkage.

Belongs to the CD-NTase family. A01 subfamily. Monomer. Interacts with Cap2 in the presence and absence of phage T2. A Cap2 dimer is bound on either side by a DncV monomer. The cofactor is Mg(2+). Post-translationally, in bacteria expressing capV-cdnD-cap2, this protein is conjugated to a number of other proteins (by Cap2 via this protein's C-terminal Gly residue), many of which are involved in metabolism. More conjugated protein is found in the absence of Cap3.

It carries out the reaction GTP + ATP = 3',3'-cGAMP + 2 diphosphate. With respect to regulation, primed for activation by Cap2 which conjugates it to cellular proteins; priming is target protein-specific (green fluorescent protein does not activate the enzyme), but which protein(s) activate is unclear. Enzymatic activity of DncV is inhibited by folate-like molecules, such as 5-methyltetrahydrofolate di-glutamate and 5-methyltetrahydrofolate, suggesting the existence of a signaling pathway that links folate-like metabolism cofactors to the regulation of cyclic dinucleotide second messenger synthesis. Lacks a regulatory loop and is constitutively activated. In terms of biological role, cyclic nucleotide synthase (second messenger synthase) of a CBASS antivirus system. CBASS (cyclic oligonucleotide-based antiphage signaling system) provides immunity against bacteriophages. The CD-NTase protein (DncV, this protein) synthesizes cyclic nucleotides in response to infection; these serve as specific second messenger signals. The signals activate a diverse range of effectors, leading to bacterial cell death and thus abortive phage infection. A type II-A(GA) CBASS system. Its function is as follows. Catalyzes the synthesis of 3',3'-cyclic GMP-AMP (cGAMP), a second messenger in cell signal transduction, from GTP and ATP in response to phage infection. Also able to produce c-di-AMP and c-di-GMP from ATP and GTP, respectively; however, cGAMP is the dominant molecule produced by DncV in vivo, contrary to the 2'3'-cGAMP produced by eukaryotes. Is required for efficient V.cholerae intestinal colonization, and down-regulates the colonization-influencing process of chemotaxis. Is not active with dATP, TTP, UTP or CTP. Its product controls the activity of cGAMP-activated phospholipase CapV, a patatin-like lipase that is a direct cGAMP receptor encoded in the dncV operon. Protects E.coli against phage infection. When the CBASS operon (capV-dncV-cap2-cap3) is introduced in E.coli MG1655 there is about 100-fold protection against phages P1 and T2. When the operon is introduced in E.coli MG1655 there is a more than 10(3) decrease in the efficiency of T2 plaque formation. Protects 100-fold against phage T5, offers no protection against T7. When the operon is introduced in E.coli MG1655 it protects against phages T2, T4, T5 and T6. Another paper shows the operon confers protection against phages P1, T2, T5 and T6 but not T4 or lambda. The protein is Cyclic GMP-AMP synthase of Vibrio cholerae serotype O1 (strain ATCC 39315 / El Tor Inaba N16961).